The primary structure comprises 160 residues: Small ribosomal subunit protein uS7 (160 aa).

It belongs to the universal ribosomal protein uS7 family. Part of the 30S ribosomal subunit. Contacts proteins S9 and S11.

In terms of biological role, one of the primary rRNA binding proteins, it binds directly to 16S rRNA where it nucleates assembly of the head domain of the 30S subunit. Is located at the subunit interface close to the decoding center, probably blocks exit of the E-site tRNA. The protein is Small ribosomal subunit protein uS7 of Rickettsia conorii (strain ATCC VR-613 / Malish 7).